The primary structure comprises 167 residues: Claudin domain-containing protein 2 (167 aa).

4 helical membrane-spanning segments follow: residues 7–27, 59–79, 96–116, and 134–154; these read LQSG…LSTA, LAVT…GMVM, TSAF…GYTV, and WLAL…DMIM.

This sequence belongs to the PMP-22/EMP/MP20 family.

The protein localises to the membrane. In Homo sapiens (Human), this protein is Claudin domain-containing protein 2 (CLDND2).